The sequence spans 97 residues: Protein RnfH (97 aa).

Belongs to the UPF0125 (RnfH) family.

This is Protein RnfH from Halorhodospira halophila (strain DSM 244 / SL1) (Ectothiorhodospira halophila (strain DSM 244 / SL1)).